Reading from the N-terminus, the 220-residue chain is Deoxyribose-phosphate aldolase (220 aa).

The active-site Proton donor/acceptor is the aspartate 89. Lysine 151 functions as the Schiff-base intermediate with acetaldehyde in the catalytic mechanism. Lysine 180 functions as the Proton donor/acceptor in the catalytic mechanism.

The protein belongs to the DeoC/FbaB aldolase family. DeoC type 1 subfamily.

It is found in the cytoplasm. It catalyses the reaction 2-deoxy-D-ribose 5-phosphate = D-glyceraldehyde 3-phosphate + acetaldehyde. It participates in carbohydrate degradation; 2-deoxy-D-ribose 1-phosphate degradation; D-glyceraldehyde 3-phosphate and acetaldehyde from 2-deoxy-alpha-D-ribose 1-phosphate: step 2/2. In terms of biological role, catalyzes a reversible aldol reaction between acetaldehyde and D-glyceraldehyde 3-phosphate to generate 2-deoxy-D-ribose 5-phosphate. The polypeptide is Deoxyribose-phosphate aldolase (Streptococcus pneumoniae (strain Hungary19A-6)).